The chain runs to 196 residues: Probable thymidylate kinase (196 aa).

Position 8-15 (8-15 (GIDASGKT)) interacts with ATP.

It belongs to the thymidylate kinase family.

It carries out the reaction dTMP + ATP = dTDP + ADP. The chain is Probable thymidylate kinase from Metallosphaera sedula (strain ATCC 51363 / DSM 5348 / JCM 9185 / NBRC 15509 / TH2).